Reading from the N-terminus, the 630-residue chain is 1-deoxy-D-xylulose-5-phosphate synthase (630 aa).

Residues histidine 75 and 116–118 (GHS) each bind thiamine diphosphate. Residue aspartate 147 coordinates Mg(2+). Thiamine diphosphate is bound by residues 148 to 149 (GA), asparagine 176, tyrosine 287, and glutamate 367. Residue asparagine 176 participates in Mg(2+) binding.

It belongs to the transketolase family. DXPS subfamily. Homodimer. It depends on Mg(2+) as a cofactor. Requires thiamine diphosphate as cofactor.

The enzyme catalyses D-glyceraldehyde 3-phosphate + pyruvate + H(+) = 1-deoxy-D-xylulose 5-phosphate + CO2. It participates in metabolic intermediate biosynthesis; 1-deoxy-D-xylulose 5-phosphate biosynthesis; 1-deoxy-D-xylulose 5-phosphate from D-glyceraldehyde 3-phosphate and pyruvate: step 1/1. Catalyzes the acyloin condensation reaction between C atoms 2 and 3 of pyruvate and glyceraldehyde 3-phosphate to yield 1-deoxy-D-xylulose-5-phosphate (DXP). The sequence is that of 1-deoxy-D-xylulose-5-phosphate synthase from Treponema pallidum (strain Nichols).